The following is a 179-amino-acid chain: ATP synthase subunit delta (179 aa).

The protein belongs to the ATPase delta chain family. As to quaternary structure, F-type ATPases have 2 components, F(1) - the catalytic core - and F(0) - the membrane proton channel. F(1) has five subunits: alpha(3), beta(3), gamma(1), delta(1), epsilon(1). F(0) has three main subunits: a(1), b(2) and c(10-14). The alpha and beta chains form an alternating ring which encloses part of the gamma chain. F(1) is attached to F(0) by a central stalk formed by the gamma and epsilon chains, while a peripheral stalk is formed by the delta and b chains.

It is found in the cell membrane. F(1)F(0) ATP synthase produces ATP from ADP in the presence of a proton or sodium gradient. F-type ATPases consist of two structural domains, F(1) containing the extramembraneous catalytic core and F(0) containing the membrane proton channel, linked together by a central stalk and a peripheral stalk. During catalysis, ATP synthesis in the catalytic domain of F(1) is coupled via a rotary mechanism of the central stalk subunits to proton translocation. In terms of biological role, this protein is part of the stalk that links CF(0) to CF(1). It either transmits conformational changes from CF(0) to CF(1) or is implicated in proton conduction. The polypeptide is ATP synthase subunit delta (Clostridium beijerinckii (strain ATCC 51743 / NCIMB 8052) (Clostridium acetobutylicum)).